A 231-amino-acid chain; its full sequence is NADH-ubiquinone oxidoreductase chain 4 (231 aa).

The next 7 membrane-spanning stretches (helical) occupy residues 1–21 (PIAG…YGII), 34–54 (LFLP…LTCL), 63–85 (IAYS…TPWG), 89–111 (AMAL…NTTY), 128–148 (ILPM…AIPP), 156–176 (LLIM…LGLS), and 211–231 (LLIA…ELVI).

Belongs to the complex I subunit 4 family.

It is found in the mitochondrion membrane. It carries out the reaction a ubiquinone + NADH + 5 H(+)(in) = a ubiquinol + NAD(+) + 4 H(+)(out). Functionally, core subunit of the mitochondrial membrane respiratory chain NADH dehydrogenase (Complex I) that is believed to belong to the minimal assembly required for catalysis. Complex I functions in the transfer of electrons from NADH to the respiratory chain. The immediate electron acceptor for the enzyme is believed to be ubiquinone. The chain is NADH-ubiquinone oxidoreductase chain 4 (MT-ND4) from Crotalus adamanteus (Eastern diamondback rattlesnake).